Consider the following 88-residue polypeptide: UPF0297 protein RBAM_024500 (88 aa).

It belongs to the UPF0297 family.

The protein is UPF0297 protein RBAM_024500 of Bacillus velezensis (strain DSM 23117 / BGSC 10A6 / LMG 26770 / FZB42) (Bacillus amyloliquefaciens subsp. plantarum).